Reading from the N-terminus, the 190-residue chain is Protein LIGHT-DEPENDENT SHORT HYPOCOTYLS 1 (190 aa).

Polar residues predominate over residues methionine 1–tyrosine 26. 2 disordered regions span residues methionine 1–asparagine 28 and glycine 145–valine 190. The ALOG domain occupies arginine 25–arginine 152. Positions lysine 150 to arginine 154 match the Nuclear localization signal motif. Residues glutamine 158 to glutamine 179 are compositionally biased toward low complexity. Residues serine 180–valine 190 show a composition bias toward polar residues.

The protein belongs to the plant homeotic and developmental regulators ALOG protein family. Expressed in hypocotyls, shoot apices and lateral root primordia and, weakly, in vascular tissues.

Its subcellular location is the nucleus. Its function is as follows. Probable transcription regulator that acts as a developmental regulator by promoting cell growth in response to continuous red (cR), far-red (cFR) and blue (cB) light in a phytochrome-dependent manner, at least during seedling development. This is Protein LIGHT-DEPENDENT SHORT HYPOCOTYLS 1 (LSH1) from Arabidopsis thaliana (Mouse-ear cress).